The chain runs to 319 residues: Beta-ketoacyl-[acyl-carrier-protein] synthase III (319 aa).

Catalysis depends on residues cysteine 110 and histidine 246. The ACP-binding stretch occupies residues 247–251 (QANYR). Asparagine 276 is a catalytic residue.

The protein belongs to the thiolase-like superfamily. FabH family. Homodimer.

The protein localises to the cytoplasm. The catalysed reaction is malonyl-[ACP] + acetyl-CoA + H(+) = 3-oxobutanoyl-[ACP] + CO2 + CoA. It participates in lipid metabolism; fatty acid biosynthesis. In terms of biological role, catalyzes the condensation reaction of fatty acid synthesis by the addition to an acyl acceptor of two carbons from malonyl-ACP. Catalyzes the first condensation reaction which initiates fatty acid synthesis and may therefore play a role in governing the total rate of fatty acid production. Possesses both acetoacetyl-ACP synthase and acetyl transacylase activities. Its substrate specificity determines the biosynthesis of branched-chain and/or straight-chain of fatty acids. The sequence is that of Beta-ketoacyl-[acyl-carrier-protein] synthase III from Lactobacillus delbrueckii subsp. bulgaricus (strain ATCC 11842 / DSM 20081 / BCRC 10696 / JCM 1002 / NBRC 13953 / NCIMB 11778 / NCTC 12712 / WDCM 00102 / Lb 14).